Reading from the N-terminus, the 100-residue chain is UPF0235 protein Cvib_0403 (100 aa).

Belongs to the UPF0235 family.

The polypeptide is UPF0235 protein Cvib_0403 (Chlorobium phaeovibrioides (strain DSM 265 / 1930) (Prosthecochloris vibrioformis (strain DSM 265))).